The chain runs to 579 residues: Putative fatty-acid--CoA ligase fadD21 (579 aa).

It belongs to the ATP-dependent AMP-binding enzyme family.

This Mycobacterium leprae (strain TN) protein is Putative fatty-acid--CoA ligase fadD21 (fadD21).